A 170-amino-acid polypeptide reads, in one-letter code: Large ribosomal subunit protein uL16 (170 aa).

The protein belongs to the universal ribosomal protein uL16 family.

This is Large ribosomal subunit protein uL16 from Methanospirillum hungatei JF-1 (strain ATCC 27890 / DSM 864 / NBRC 100397 / JF-1).